A 447-amino-acid chain; its full sequence is Maintenance of mitochondrial morphology protein 1 (447 aa).

Topologically, residues 1–109 are lumenal; that stretch reads MKSPNETSFT…VFSAWSFAQG (109 aa). Residues 110–130 traverse the membrane as a helical segment; it reads LVIGQLSVIVVLIFFIKFFIF. Over 131-447 the chain is Cytoplasmic; sequence SEGPIKTEGP…DDISMKSTDL (317 aa). The region spanning 208–421 is the SMP-LTD domain; the sequence is SPETLDWFNV…EPRFQFIKLP (214 aa).

Belongs to the MMM1 family. As to quaternary structure, homodimer. Component of the ER-mitochondria encounter structure (ERMES) or MDM complex, composed of MMM1, MDM10, MDM12 and MDM34. An MMM1 homodimer associates with one molecule of MDM12 on each side in a pairwise head-to-tail manner, and the SMP-LTD domains of MMM1 and MDM12 generate a continuous hydrophobic tunnel for phospholipid trafficking.

Its subcellular location is the endoplasmic reticulum membrane. Component of the ERMES/MDM complex, which serves as a molecular tether to connect the endoplasmic reticulum (ER) and mitochondria. Components of this complex are involved in the control of mitochondrial shape and protein biogenesis, and function in nonvesicular lipid trafficking between the ER and mitochondria. The MDM12-MMM1 subcomplex functions in the major beta-barrel assembly pathway that is responsible for biogenesis of all outer membrane beta-barrel proteins, and acts in a late step after the SAM complex. The MDM10-MDM12-MMM1 subcomplex further acts in the TOM40-specific pathway after the action of the MDM12-MMM1 complex. Essential for establishing and maintaining the structure of mitochondria and maintenance of mtDNA nucleoids. The chain is Maintenance of mitochondrial morphology protein 1 from Lachancea thermotolerans (strain ATCC 56472 / CBS 6340 / NRRL Y-8284) (Yeast).